Consider the following 370-residue polypeptide: 3-dehydroquinate synthase (370 aa).

NAD(+) is bound by residues 112-116 (GVIGD), 136-137 (TT), Lys-149, Lys-158, and 176-179 (TLAT). 3 residues coordinate Zn(2+): Glu-191, His-254, and His-276.

This sequence belongs to the sugar phosphate cyclases superfamily. Dehydroquinate synthase family. Co(2+) serves as cofactor. It depends on Zn(2+) as a cofactor. Requires NAD(+) as cofactor.

The protein localises to the cytoplasm. The catalysed reaction is 7-phospho-2-dehydro-3-deoxy-D-arabino-heptonate = 3-dehydroquinate + phosphate. The protein operates within metabolic intermediate biosynthesis; chorismate biosynthesis; chorismate from D-erythrose 4-phosphate and phosphoenolpyruvate: step 2/7. Functionally, catalyzes the conversion of 3-deoxy-D-arabino-heptulosonate 7-phosphate (DAHP) to dehydroquinate (DHQ). In Xylella fastidiosa (strain M12), this protein is 3-dehydroquinate synthase.